The following is a 233-amino-acid chain: uncharacterized protein (233 aa).

The segment at F196–K212 is the nascent chain stimulates ribosomal stalling during translation by interfering with the conformation of the peptidyl transferase center (PTC), and the translating mRNA by adopting a difficult-to-decode structure at the ribosome decoding center.

Acts as an endogenous target of the ribosome quality control (RQC) pathway. During translation, the nascent chain has a propensity to stall ribosomes, thereby stimulating activation of the RQC pathway. This is an uncharacterized protein from Saccharomyces cerevisiae (strain ATCC 204508 / S288c) (Baker's yeast).